Here is a 204-residue protein sequence, read N- to C-terminus: Glycerol-3-phosphate acyltransferase (204 aa).

Transmembrane regions (helical) follow at residues 8-28 (ILIF…CYIF), 53-73 (VPAA…VVIA), 81-101 (FITA…IFFG), 116-136 (FGFS…VAII), and 155-175 (VIFT…IIIL).

It belongs to the PlsY family. In terms of assembly, probably interacts with PlsX.

It localises to the cell inner membrane. The enzyme catalyses an acyl phosphate + sn-glycerol 3-phosphate = a 1-acyl-sn-glycero-3-phosphate + phosphate. It functions in the pathway lipid metabolism; phospholipid metabolism. Functionally, catalyzes the transfer of an acyl group from acyl-phosphate (acyl-PO(4)) to glycerol-3-phosphate (G3P) to form lysophosphatidic acid (LPA). This enzyme utilizes acyl-phosphate as fatty acyl donor, but not acyl-CoA or acyl-ACP. The protein is Glycerol-3-phosphate acyltransferase of Francisella tularensis subsp. holarctica (strain FTNF002-00 / FTA).